A 335-amino-acid chain; its full sequence is Phosphate acyltransferase (335 aa).

Belongs to the PlsX family. Homodimer. Probably interacts with PlsY.

The protein resides in the cytoplasm. It catalyses the reaction a fatty acyl-[ACP] + phosphate = an acyl phosphate + holo-[ACP]. The protein operates within lipid metabolism; phospholipid metabolism. Catalyzes the reversible formation of acyl-phosphate (acyl-PO(4)) from acyl-[acyl-carrier-protein] (acyl-ACP). This enzyme utilizes acyl-ACP as fatty acyl donor, but not acyl-CoA. The sequence is that of Phosphate acyltransferase from Streptococcus pyogenes serotype M6 (strain ATCC BAA-946 / MGAS10394).